A 360-amino-acid polypeptide reads, in one-letter code: Diacylglycerol O-acyltransferase 3 (360 aa).

A disordered region spans residues 153-182 (KAKAMKKMTEMDSESSSSSESSDSDCDKGK). The [2Fe-2S] cluster site is built by C265, C270, C298, and C302.

The protein belongs to the diacylglycerol acyltransferase family. [2Fe-2S] cluster is required as a cofactor.

It carries out the reaction an acyl-CoA + a 1,2-diacyl-sn-glycerol = a triacyl-sn-glycerol + CoA. Its pathway is glycerolipid metabolism; triacylglycerol biosynthesis. In terms of biological role, involved in triacylglycerol (TAG) biosynthesis. Catalyzes the acylation of the sn-3 hydroxy group of sn-1,2-diacylglycerol using acyl-CoA. May preferentially use linolenoyl-CoA as substrate and to a lesser extent linoleoyl-CoA. May contribute to the active recycling of linoleate and linolenate into TAG when seed oil breakdown is blocked. The polypeptide is Diacylglycerol O-acyltransferase 3 (Arabidopsis thaliana (Mouse-ear cress)).